Reading from the N-terminus, the 583-residue chain is Aspartate--tRNA ligase (583 aa).

Glu-174 is a binding site for L-aspartate. The tract at residues 198 to 201 (QITK) is aspartate. An L-aspartate-binding site is contributed by Arg-220. Residues 220-222 (RDE) and Gln-229 each bind ATP. His-443 contacts L-aspartate. Glu-477 lines the ATP pocket. Arg-484 is a binding site for L-aspartate. 529 to 532 (GLDR) provides a ligand contact to ATP.

The protein belongs to the class-II aminoacyl-tRNA synthetase family. Type 1 subfamily. In terms of assembly, homodimer.

It is found in the cytoplasm. The catalysed reaction is tRNA(Asp) + L-aspartate + ATP = L-aspartyl-tRNA(Asp) + AMP + diphosphate. Its function is as follows. Catalyzes the attachment of L-aspartate to tRNA(Asp) in a two-step reaction: L-aspartate is first activated by ATP to form Asp-AMP and then transferred to the acceptor end of tRNA(Asp). The polypeptide is Aspartate--tRNA ligase (Streptococcus thermophilus (strain ATCC BAA-250 / LMG 18311)).